The primary structure comprises 562 residues: Protein wntless (562 aa).

At 1-13 the chain is on the cytoplasmic side; sequence MSGTILENLSGRK. The chain crosses the membrane as a helical span at residues 14-34; the sequence is LSILVGSLLLCQVLCFLLGGL. The Lumenal portion of the chain corresponds to 35–239; sequence YAPVPAGHTN…AIHQNGGFTH (205 aa). N-linked (GlcNAc...) asparagine glycosylation is present at asparagine 58. Residues 240-260 form a helical membrane-spanning segment; sequence VWLMLKTLLFPFVVGIMVWFW. At 261 to 270 the chain is on the cytoplasmic side; it reads RRVHLLQRSP. A helical transmembrane segment spans residues 271–291; it reads ALLEYMLLYLGGALTFLNLPL. Topologically, residues 292–311 are lumenal; sequence EYLSLTIEMPYMLLLSDIRQ. The chain crosses the membrane as a helical span at residues 312-332; sequence GIFYAMLLSFWLVFAGEHMLI. Over 333 to 344 the chain is Cytoplasmic; that stretch reads QDSHNKSTIRSR. The chain crosses the membrane as a helical span at residues 345-365; the sequence is YWKHLSAVVVGCISLFVFDIS. Residues 366–386 lie on the Lumenal side of the membrane; sequence ERGVQLRNPFYSIWTTPLGAK. The chain crosses the membrane as a helical span at residues 387–407; it reads VAMSFILLAGVSAAVYFLFLC. Topologically, residues 408–441 are cytoplasmic; that stretch reads YMISKVFKNIGDKRTSLPSMSQARRLHYEGLIYR. The chain crosses the membrane as a helical span at residues 442-462; sequence FKFLMLATLLCAALTVTGFIM. The Lumenal segment spans residues 463–482; that stretch reads GQMAEGQWKWNDDVEIQLTS. A helical membrane pass occupies residues 483–503; the sequence is AFLTGVYGMWNIYIFALLILY. The Cytoplasmic segment spans residues 504–562; sequence APSHKQWPTMHHSDETTQSNENIVASAASEEIEFSNLPSDSNPSEISSLTSFTRKVAFE. The segment at 538 to 562 is disordered; it reads SNLPSDSNPSEISSLTSFTRKVAFE. A compositionally biased stretch (polar residues) spans 539 to 556; sequence NLPSDSNPSEISSLTSFT.

Belongs to the wntless family. In terms of assembly, interacts with wg; in the Golgi. Interacts with Vps35, a component of the retromer complex; wls stability is regulated by Vps35.

It is found in the presynaptic cell membrane. The protein localises to the postsynaptic cell membrane. The protein resides in the cell membrane. Its subcellular location is the endoplasmic reticulum membrane. It localises to the endosome membrane. It is found in the golgi apparatus membrane. A segment polarity gene required for wingless (wg)-dependent patterning processes, acting in both wg-sending cells and wg-target cells. In non-neuronal cells wls directs wg secretion. The wls traffic loop encompasses the Golgi, the cell surface, an endocytic compartment and a retrograde route leading back to the Golgi, and involves clathrin-mediated endocytosis and the retromer complex (a conserved protein complex consisting of Vps35 and Vps26). In neuronal cells (the larval motorneuron NMJ), the wg signal moves across the synapse via the release of wls-containing exosome-like vesicles. Postsynaptic wls is required for the trafficking of fz2 through the fz2-interacting protein Grip. This Drosophila persimilis (Fruit fly) protein is Protein wntless.